The sequence spans 435 residues: DEAD-box ATP-dependent RNA helicase CshB (435 aa).

The Q motif motif lies at 5–33; sequence SRFDQFGFQPFIGLAIDKLGFYEPTEVQQ. The 173-residue stretch at 36-208 folds into the Helicase ATP-binding domain; sequence IPGILKGESI…SKYMENPRYE (173 aa). Residue 49–56 participates in ATP binding; sequence SQTGTGKT. Residues 156 to 159 carry the DEAD box motif; sequence DEAD. The 144-residue stretch at 235–378 folds into the Helicase C-terminal domain; it reads LLKNVLVGSQ…HVDWKNKEFV (144 aa). Positions 383 to 435 are disordered; the sequence is RNRRAKREAKRETADPREIGMRKKAKQKGKPNYKKKINYKMNEIKRRERRKKR. Basic and acidic residues predominate over residues 391 to 403; that stretch reads AKRETADPREIGM. A compositionally biased stretch (basic residues) spans 404 to 420; it reads RKKAKQKGKPNYKKKIN.

The protein belongs to the DEAD box helicase family. CshB subfamily.

It is found in the cytoplasm. It catalyses the reaction ATP + H2O = ADP + phosphate + H(+). Functionally, DEAD-box RNA helicase involved in cold tolerance, motility, and tolerance to heat, alkali and oxidative stress. This Listeria monocytogenes serovar 1/2a (strain ATCC BAA-679 / EGD-e) protein is DEAD-box ATP-dependent RNA helicase CshB.